The following is a 208-amino-acid chain: Tektin bundle-interacting protein 1 (208 aa).

In terms of assembly, microtubule inner protein component of sperm flagellar doublet microtubules. As to expression, expressed in trachea multiciliated cells.

Its subcellular location is the cytoplasm. It is found in the cytoskeleton. The protein resides in the cilium axoneme. The protein localises to the flagellum axoneme. Microtubule inner protein (MIP) part of the dynein-decorated doublet microtubules (DMTs) in cilia axoneme, which is required for motile cilia beating. Located at the center of the tektin bundle where may function to recruit tektins or stabilize the bundle. This is Tektin bundle-interacting protein 1 (TEKTIP1) from Bos taurus (Bovine).